The primary structure comprises 512 residues: Maturase K (512 aa).

The protein belongs to the intron maturase 2 family. MatK subfamily.

It localises to the plastid. The protein localises to the chloroplast. Its function is as follows. Usually encoded in the trnK tRNA gene intron. Probably assists in splicing its own and other chloroplast group II introns. The polypeptide is Maturase K (Wolffiella gladiata (Florida mud-midget)).